The sequence spans 934 residues: Serine/threonine-protein kinase PknD (934 aa).

The region spanning 4–296 (YELIRLIGKG…ELRQALQPYL (293 aa)) is the Protein kinase domain. Residues 10–18 (IGKGGMGEV) and K33 each bind ATP. Residue D138 is the Proton acceptor of the active site.

The protein belongs to the protein kinase superfamily. Ser/Thr protein kinase family. Autophosphorylated on serine and threonine residues.

It carries out the reaction L-seryl-[protein] + ATP = O-phospho-L-seryl-[protein] + ADP + H(+). The catalysed reaction is L-threonyl-[protein] + ATP = O-phospho-L-threonyl-[protein] + ADP + H(+). Its function is as follows. Together with the serine/threonine kinase Pkn1, may play a role in the specific interactions with host proteins during intracellular growth. The polypeptide is Serine/threonine-protein kinase PknD (Chlamydia trachomatis serovar A (strain ATCC VR-571B / DSM 19440 / HAR-13)).